The chain runs to 323 residues: Beta-ketoacyl-[acyl-carrier-protein] synthase III (323 aa).

Catalysis depends on residues C114 and H250. The interval 251–255 is ACP-binding; the sequence is QANIR. N280 is a catalytic residue.

This sequence belongs to the thiolase-like superfamily. FabH family. Homodimer.

Its subcellular location is the cytoplasm. The enzyme catalyses malonyl-[ACP] + acetyl-CoA + H(+) = 3-oxobutanoyl-[ACP] + CO2 + CoA. The protein operates within lipid metabolism; fatty acid biosynthesis. In terms of biological role, catalyzes the condensation reaction of fatty acid synthesis by the addition to an acyl acceptor of two carbons from malonyl-ACP. Catalyzes the first condensation reaction which initiates fatty acid synthesis and may therefore play a role in governing the total rate of fatty acid production. Possesses both acetoacetyl-ACP synthase and acetyl transacylase activities. Its substrate specificity determines the biosynthesis of branched-chain and/or straight-chain of fatty acids. This Ruegeria sp. (strain TM1040) (Silicibacter sp.) protein is Beta-ketoacyl-[acyl-carrier-protein] synthase III.